We begin with the raw amino-acid sequence, 234 residues long: MTKIAMANFKSAMPIFKSHAYLKELEKTLKPQHFDRVFVFPDFLGLLPNSFLHFTLGAQNAYPRDCGAFTGEITSKHLEELKIHTLLIGHSERRTLLKESPSFLKEKFDFFKDKNFKIVYCIGEDLTTREKGFRAVKEFLSEQLENIDLNYSNLIVAYEPIWAIGTKKSASLEDIYLTHGFLKQILNQKTPLLYGGSVNVQNAKEILGIDSVDGLLIGSASWELENFKTIISFL.

8 to 10 contacts substrate; sequence NFK. The Electrophile role is filled by H90. E159 functions as the Proton acceptor in the catalytic mechanism. Substrate contacts are provided by G165 and S197.

This sequence belongs to the triosephosphate isomerase family. In terms of assembly, homodimer.

It is found in the cytoplasm. It catalyses the reaction D-glyceraldehyde 3-phosphate = dihydroxyacetone phosphate. Its pathway is carbohydrate biosynthesis; gluconeogenesis. The protein operates within carbohydrate degradation; glycolysis; D-glyceraldehyde 3-phosphate from glycerone phosphate: step 1/1. Involved in the gluconeogenesis. Catalyzes stereospecifically the conversion of dihydroxyacetone phosphate (DHAP) to D-glyceraldehyde-3-phosphate (G3P). In Helicobacter pylori (strain P12), this protein is Triosephosphate isomerase.